A 185-amino-acid chain; its full sequence is Proton-translocating ferredoxin:NAD(+) oxidoreductase complex subunit G (185 aa).

The chain crosses the membrane as a helical span at residues 14–34 (TKNLTITCFISGIIIAAVYYI). Thr161 is modified (FMN phosphoryl threonine).

Belongs to the RnfG family. In terms of assembly, the complex is composed of six subunits: RnfA, RnfB, RnfC, RnfD, RnfE and RnfG. FMN serves as cofactor.

The protein resides in the cell membrane. Functionally, part of a membrane-bound complex that couples electron transfer with translocation of ions across the membrane. Couples electron transfer from reduced ferredoxin to NAD(+) with translocation of H(+) out of the cell. Essential for energy conservation during autotrophic growth. Contributes to ATP synthesis during heterotrophic growth. This Clostridium ljungdahlii (strain ATCC 55383 / DSM 13528 / PETC) protein is Proton-translocating ferredoxin:NAD(+) oxidoreductase complex subunit G.